The following is a 317-amino-acid chain: Acetylglutamate kinase (317 aa).

Residues 75–76 (GG), Arg97, and Asn196 contribute to the substrate site.

It belongs to the acetylglutamate kinase family. ArgB subfamily.

The protein localises to the cytoplasm. The catalysed reaction is N-acetyl-L-glutamate + ATP = N-acetyl-L-glutamyl 5-phosphate + ADP. It functions in the pathway amino-acid biosynthesis; L-arginine biosynthesis; N(2)-acetyl-L-ornithine from L-glutamate: step 2/4. Functionally, catalyzes the ATP-dependent phosphorylation of N-acetyl-L-glutamate. The chain is Acetylglutamate kinase from Corynebacterium jeikeium (strain K411).